The primary structure comprises 217 residues: Uracil-DNA glycosylase (217 aa).

The active-site Proton acceptor is aspartate 62.

It belongs to the uracil-DNA glycosylase (UDG) superfamily. UNG family.

Its subcellular location is the cytoplasm. The enzyme catalyses Hydrolyzes single-stranded DNA or mismatched double-stranded DNA and polynucleotides, releasing free uracil.. Its function is as follows. Excises uracil residues from the DNA which can arise as a result of misincorporation of dUMP residues by DNA polymerase or due to deamination of cytosine. The protein is Uracil-DNA glycosylase of Streptococcus equi subsp. zooepidemicus (strain H70).